The primary structure comprises 113 residues: Large ribosomal subunit protein bL17 (113 aa).

Belongs to the bacterial ribosomal protein bL17 family. In terms of assembly, part of the 50S ribosomal subunit. Contacts protein L32.

The sequence is that of Large ribosomal subunit protein bL17 from Natranaerobius thermophilus (strain ATCC BAA-1301 / DSM 18059 / JW/NM-WN-LF).